The following is a 476-amino-acid chain: Serine protease HTRA1B (476 aa).

Positions 1–19 are cleaved as a signal peptide; sequence MRLLILCASIILVPLLCDA. The IGFBP N-terminal domain maps to 25-109; it reads YVIGCPERCD…RGKTGVCVCK (85 aa). Disulfide bonds link Cys-29-Cys-54, Cys-33-Cys-56, Cys-38-Cys-57, Cys-45-Cys-60, Cys-68-Cys-85, and Cys-79-Cys-106. One can recognise a Kazal-like domain in the interval 94-153; the sequence is TTTVRRRGKTGVCVCKSSEPVCGSDGVSYRNICELKRVSNRAQKLQQPPIIFIQRGACGK. Residues 200 to 360 form a serine protease region; that stretch reads GSGFVVSEDG…IPSDKIRQFL (161 aa). Active-site charge relay system residues include His-216, Asp-246, and Ser-324. Positions 361 to 463 constitute a PDZ domain; the sequence is AESHDRQAKG…LRAVVRRGNE (103 aa).

This sequence belongs to the peptidase S1C family. In terms of assembly, forms homotrimers. In the presence of substrate, may form higher-order multimers in a PDZ-independent manner.

It localises to the secreted. Its subcellular location is the cytoplasm. The protein localises to the cytosol. In terms of biological role, serine protease with a variety of targets, including extracellular matrix proteins and proteoglycans. Through cleavage of proteoglycans, may release soluble FGF-glycosaminoglycan complexes that promote the range and intensity of FGF signals in the extracellular space. Regulates the availability of insulin-like growth factors (IGFs) by cleaving IGF-binding proteins. Inhibits signaling mediated by TGF-beta family members. Consequently, may regulate many physiological processes. Intracellularly, degrades TSC2, leading to the activation of TSC2 downstream targets. This chain is Serine protease HTRA1B (htra1b), found in Danio rerio (Zebrafish).